A 492-amino-acid polypeptide reads, in one-letter code: MKPTTVIGAGFGGLALAIRLQAAGIPVLLLEQRDKPGGRAYVYEDQGFTFDAGPTVITDPSAIEELFALAGKQLKEYVELLPVTPFYRLCWESGKVFNYDNDQTRLEAQIQQFNPRDVEGYRQFLDYSRAVFKEGYLKLGTVPFLSFRDMLRAAPQLAKLQAWRSVYSKVASYIEDEHLRQAFSFHSLLVGGNPFATSSIYTLIHALEREWGVWFPRGGTGALVQGMIKLFQDLGGEVVLNARVSHMETTGNKIEAVHLEDGRRFLTQAVASNADVVHTYRDLLSQHPAAVKQSNKLQTKRMSNSLFVLYFGLNHHHDQLAHHTVCFGPRYRELIDEIFNHDGLAEDFSLYLHAPCVTDSSLAPEGCGSYYVLAPVPHLGTANLDWTVEGPKLRDRIFAYLEQHYMPGLRSQLVTHRMFTPFDFRDQLNAYHGSAFSVEPVLTQSAWFRPHNRDKTITNLYLVGAGTHPGAGIPGVIGSAKATAGLMLEDLI.

Residue 5-38 participates in FAD binding; the sequence is TVIGAGFGGLALAIRLQAAGIPVLLLEQRDKPGG.

The protein belongs to the carotenoid/retinoid oxidoreductase family. The cofactor is FAD.

It localises to the cell membrane. The catalysed reaction is 15-cis-phytoene + 4 A = all-trans-lycopene + 4 AH2. It participates in carotenoid biosynthesis; lycopene biosynthesis. Its activity is regulated as follows. Inhibited by NAD and NADP. In terms of biological role, converts 15-cis-phytoene into all-trans-lycopene via the intermediary of all-trans-phytofluene, all-trans-zeta-carotene and all-trans-neurosporene, by the introduction of four double bonds. The chain is Phytoene desaturase (lycopene-forming) (crtI) from Pantoea ananas (Erwinia uredovora).